The chain runs to 189 residues: Peptidyl-tRNA hydrolase (189 aa).

Tyr14 lines the tRNA pocket. Catalysis depends on His19, which acts as the Proton acceptor. Positions 64, 66, and 112 each coordinate tRNA.

The protein belongs to the PTH family. In terms of assembly, monomer.

It is found in the cytoplasm. It carries out the reaction an N-acyl-L-alpha-aminoacyl-tRNA + H2O = an N-acyl-L-amino acid + a tRNA + H(+). Functionally, hydrolyzes ribosome-free peptidyl-tRNAs (with 1 or more amino acids incorporated), which drop off the ribosome during protein synthesis, or as a result of ribosome stalling. In terms of biological role, catalyzes the release of premature peptidyl moieties from peptidyl-tRNA molecules trapped in stalled 50S ribosomal subunits, and thus maintains levels of free tRNAs and 50S ribosomes. This Clostridium botulinum (strain ATCC 19397 / Type A) protein is Peptidyl-tRNA hydrolase.